The chain runs to 247 residues: MVIKSVGIESDKNSDTNERLINYNIEKPQVTQNVSNQLILTTLNDLYNWARLSSLWPLLYGTSCCFIEFACLLGSRFDFDRFGLVPRCSPRQADLIITAGTVTMKMAPSLVRLYEQMPEPKYVIAMGACTITGGMFSTDSYSTVRGVDKLIPVDVYLPGCPPKPEAIIDAVIKLRKKVAQENLVERGKLAQTHRYHSIKHELTLSSPVYTGKYLNSSARQTPPRSLSEATGVPVNLIFEMTKKNAIK.

[4Fe-4S] cluster is bound by residues cysteine 64, cysteine 65, cysteine 129, and cysteine 160.

The protein belongs to the complex I 20 kDa subunit family. NDH is composed of at least 16 different subunits, 5 of which are encoded in the nucleus. Requires [4Fe-4S] cluster as cofactor.

It localises to the plastid. Its subcellular location is the chloroplast thylakoid membrane. It carries out the reaction a plastoquinone + NADH + (n+1) H(+)(in) = a plastoquinol + NAD(+) + n H(+)(out). It catalyses the reaction a plastoquinone + NADPH + (n+1) H(+)(in) = a plastoquinol + NADP(+) + n H(+)(out). NDH shuttles electrons from NAD(P)H:plastoquinone, via FMN and iron-sulfur (Fe-S) centers, to quinones in the photosynthetic chain and possibly in a chloroplast respiratory chain. The immediate electron acceptor for the enzyme in this species is believed to be plastoquinone. Couples the redox reaction to proton translocation, and thus conserves the redox energy in a proton gradient. The protein is NAD(P)H-quinone oxidoreductase subunit K, chloroplastic of Mesostigma viride (Green alga).